Consider the following 307-residue polypeptide: Pseudouridine-5'-phosphate glycosidase (307 aa).

Residue Glu-28 is the Proton donor of the active site. Substrate contacts are provided by Lys-89 and Val-109. Residue Asp-141 coordinates Mn(2+). Ser-143 to Asp-145 lines the substrate pocket. Lys-162 acts as the Nucleophile in catalysis.

This sequence belongs to the pseudouridine-5'-phosphate glycosidase family. Homotrimer. Mn(2+) is required as a cofactor.

The enzyme catalyses D-ribose 5-phosphate + uracil = psi-UMP + H2O. Its function is as follows. Catalyzes the reversible cleavage of pseudouridine 5'-phosphate (PsiMP) to ribose 5-phosphate and uracil. Functions biologically in the cleavage direction, as part of a pseudouridine degradation pathway. The chain is Pseudouridine-5'-phosphate glycosidase from Alkaliphilus metalliredigens (strain QYMF).